Reading from the N-terminus, the 212-residue chain is Imidazole glycerol phosphate synthase subunit HisH (212 aa).

The Glutamine amidotransferase type-1 domain maps to 1-211 (MIGVIDYGMG…TKMAAEQQVK (211 aa)). C79 serves as the catalytic Nucleophile. Catalysis depends on residues H186 and E188.

Heterodimer of HisH and HisF.

It localises to the cytoplasm. The enzyme catalyses 5-[(5-phospho-1-deoxy-D-ribulos-1-ylimino)methylamino]-1-(5-phospho-beta-D-ribosyl)imidazole-4-carboxamide + L-glutamine = D-erythro-1-(imidazol-4-yl)glycerol 3-phosphate + 5-amino-1-(5-phospho-beta-D-ribosyl)imidazole-4-carboxamide + L-glutamate + H(+). It carries out the reaction L-glutamine + H2O = L-glutamate + NH4(+). It participates in amino-acid biosynthesis; L-histidine biosynthesis; L-histidine from 5-phospho-alpha-D-ribose 1-diphosphate: step 5/9. IGPS catalyzes the conversion of PRFAR and glutamine to IGP, AICAR and glutamate. The HisH subunit catalyzes the hydrolysis of glutamine to glutamate and ammonia as part of the synthesis of IGP and AICAR. The resulting ammonia molecule is channeled to the active site of HisF. The chain is Imidazole glycerol phosphate synthase subunit HisH from Bacillus velezensis (strain DSM 23117 / BGSC 10A6 / LMG 26770 / FZB42) (Bacillus amyloliquefaciens subsp. plantarum).